A 149-amino-acid polypeptide reads, in one-letter code: MADQLTEEQIAEFKEAFSLFDKDGDGTITTKELGTVMRSLGQNPTEAELQDMINEVDADGNGTIDFPEFLTMMARKMKDTDSEEEIREAFRVFDKDGNGFISAAELRHVMTNLGEKLTDEEVDEMIREADIDGDGQVNYEEFVKMMTSK.

Ala2 carries the N-acetylalanine modification. 4 EF-hand domains span residues 8-43, 44-79, 81-116, and 117-149; these read EQIA…LGQN, PTEA…KMKD, DSEE…LGEK, and LTDE…MTSK. Ca(2+) is bound by residues Asp21, Asp23, Asp25, Thr27, Glu32, Asp57, Asp59, Asn61, Thr63, Glu68, Asp94, Asp96, Asn98, and Glu105. N6,N6,N6-trimethyllysine is present on Lys116. 5 residues coordinate Ca(2+): Asp130, Asp132, Asp134, Gln136, and Glu141.

This sequence belongs to the calmodulin family.

Calmodulin mediates the control of a large number of enzymes, ion channels and other proteins by Ca(2+). Among the enzymes to be stimulated by the calmodulin-Ca(2+) complex are a number of protein kinases and phosphatases. This is Calmodulin from Metridium senile (Brown sea anemone).